The sequence spans 241 residues: MDWRDQGILLTVRRHGESSALIEVFTEDHGLHAGLVRGGASRKMAPHLQPGAQLDLTWSARLEDHLGTYKAEPLRSRAGMALSGRLALAGLNAVCALLAFALPDRAPYPALYHRSSALLDLLDSEDLWPLAYLRWELSLLEDLGYGLDLSACAATGVTQDLRYVSPKTGRAVSGAAAGEWADRLLPLPPVMRGEGAAEDIEILTALRTTGFFLESKLAPALGNRPIPEARGRFLDALARRV.

This sequence belongs to the RecO family.

Functionally, involved in DNA repair and RecF pathway recombination. The chain is DNA repair protein RecO from Ruegeria sp. (strain TM1040) (Silicibacter sp.).